A 379-amino-acid chain; its full sequence is 1-deoxy-D-xylulose 5-phosphate reductoisomerase (379 aa).

NADPH-binding residues include Thr10, Gly11, Ser12, Ile13, Asn39, and Asn121. Lys122 provides a ligand contact to 1-deoxy-D-xylulose 5-phosphate. Glu123 serves as a coordination point for NADPH. Asp147 contacts Mn(2+). Ser148, Glu149, Ser173, and His196 together coordinate 1-deoxy-D-xylulose 5-phosphate. Glu149 is a Mn(2+) binding site. Gly202 serves as a coordination point for NADPH. The 1-deoxy-D-xylulose 5-phosphate site is built by Ser209, Asn214, Lys215, and Glu218. Glu218 contacts Mn(2+).

The protein belongs to the DXR family. It depends on Mg(2+) as a cofactor. Mn(2+) is required as a cofactor.

The catalysed reaction is 2-C-methyl-D-erythritol 4-phosphate + NADP(+) = 1-deoxy-D-xylulose 5-phosphate + NADPH + H(+). The protein operates within isoprenoid biosynthesis; isopentenyl diphosphate biosynthesis via DXP pathway; isopentenyl diphosphate from 1-deoxy-D-xylulose 5-phosphate: step 1/6. Catalyzes the NADPH-dependent rearrangement and reduction of 1-deoxy-D-xylulose-5-phosphate (DXP) to 2-C-methyl-D-erythritol 4-phosphate (MEP). The polypeptide is 1-deoxy-D-xylulose 5-phosphate reductoisomerase (Chlamydia pneumoniae (Chlamydophila pneumoniae)).